The following is a 226-amino-acid chain: Protein DVU_0532 (226 aa).

Transmembrane regions (helical) follow at residues 1-23 (MYAF…GLLA), 46-57 (AIGLQGAVQSAL), 73-99 (FFTV…NVIL), 112-131 (MGVA…MIAL), 141-164 (ILTT…GFLA), and 194-222 (LSHI…TRGP).

Requires heme b as cofactor.

Its subcellular location is the cell membrane. HMWC (high-molecular-weight cytochrome c), ORF2, ORF3, ORF4, ORF5 and ORF6 in the HMC operon form a transmembrane protein complex that allows electron flow from the periplasmic hydrogenase to the cytoplasmic enzymes that catalyze reduction of sulfates. The protein is Protein DVU_0532 of Nitratidesulfovibrio vulgaris (strain ATCC 29579 / DSM 644 / CCUG 34227 / NCIMB 8303 / VKM B-1760 / Hildenborough) (Desulfovibrio vulgaris).